The chain runs to 957 residues: Glycine dehydrogenase (decarboxylating) (957 aa).

Residue Lys708 is modified to N6-(pyridoxal phosphate)lysine.

The protein belongs to the GcvP family. In terms of assembly, the glycine cleavage system is composed of four proteins: P, T, L and H. The cofactor is pyridoxal 5'-phosphate.

The enzyme catalyses N(6)-[(R)-lipoyl]-L-lysyl-[glycine-cleavage complex H protein] + glycine + H(+) = N(6)-[(R)-S(8)-aminomethyldihydrolipoyl]-L-lysyl-[glycine-cleavage complex H protein] + CO2. Its function is as follows. The glycine cleavage system catalyzes the degradation of glycine. The P protein binds the alpha-amino group of glycine through its pyridoxal phosphate cofactor; CO(2) is released and the remaining methylamine moiety is then transferred to the lipoamide cofactor of the H protein. This is Glycine dehydrogenase (decarboxylating) from Escherichia coli (strain ATCC 8739 / DSM 1576 / NBRC 3972 / NCIMB 8545 / WDCM 00012 / Crooks).